A 199-amino-acid polypeptide reads, in one-letter code: uncharacterized protein (199 aa).

Helical transmembrane passes span 1-21 (MEQFYYYWSMWFLWVLTTFIF), 28-48 (IAVSVFILTNIILSIHDIALY), 51-71 (LNAAYLMFFVCGCVYAGYLGM), 83-103 (LVAAYAFVYLFALYDPVWFII), 127-147 (QLVLFVLGMCQGELVYSFVIQ), and 154-174 (AVGGFQWLNACSAGMILLFGI).

Its subcellular location is the cell membrane. This is an uncharacterized protein from Bacillus subtilis (strain 168).